The chain runs to 1022 residues: Sodium-dependent transporter snf-12 (1022 aa).

Over 1 to 165 (MNGEWKSALR…RRELWRTQKD (165 aa)) the chain is Cytoplasmic. Residues 166 to 185 (FFLSCLGFMVGVGHTMRFPA) traverse the membrane as a helical segment. Over 186–192 (KVYQHGG) the chain is Extracellular. Residues 193-213 (GVFFIPYLFSLIFFGLPLVFL) form a helical membrane-spanning segment. Residues 214–241 (HLSLGQYTGQAANTAFQRLMPIGSGVGW) are Cytoplasmic-facing. The helical transmembrane segment at 242–262 (ALVVIAIPVAVYYNIIVAWAI) threads the bilayer. The Extracellular portion of the chain corresponds to 263-337 (HYFFQSAKGL…DFALGPLQSH (75 aa)). The chain crosses the membrane as a helical span at residues 338–358 (LVLSLAAAWLLVFFGVFKGLG). Position 359 (Ser-359) is a topological domain, cytoplasmic. A helical transmembrane segment spans residues 360–380 (IAQTMNVTATVPYLLLSILLL). Residues 381-412 (RGISLPGANKGLTFLFTVDSTKLWKWQIWKSA) are Extracellular-facing. Residues 413–433 (AEQVFYELGIDAGPLISMAAF) form a helical membrane-spanning segment. The Cytoplasmic segment spans residues 434–444 (SRYRNNIYRDS). The helical transmembrane segment at 445 to 465 (VLLVIMDALTSCLSGMVIFSF) threads the bilayer. Residues 466–498 (VGFIASESNSNVNDVLKHDPLYLSFTVYPGVTS) lie on the Extracellular side of the membrane. The helical transmembrane segment at 499–519 (FMYWGGLWATLFFGMLVLAAI) threads the bilayer. The Cytoplasmic portion of the chain corresponds to 520–550 (DAEFAWLEMIASAFMNHFSMKNKAVENRLLA). A helical transmembrane segment spans residues 551 to 571 (FLCLAGFFLGLPLCAQGGIFV). Over 572-584 (FHAIENLNANWNS) the chain is Extracellular. A helical transmembrane segment spans residues 585 to 605 (FSLALLSVAIVCYVYGIDNYL). The Cytoplasmic portion of the chain corresponds to 606-641 (TDISAMLRVPRIQISKATRLKEKLIYFFGPGGIYIK). The chain crosses the membrane as a helical span at residues 642–662 (FSLCFICPVILTVLLVASVLG). Topologically, residues 663–677 (YQRISFAGRPIPIDY) are extracellular. Residues 678–698 (EIVAWIVMIGPLLVVPLVAFM) form a helical membrane-spanning segment. At 699 to 1022 (QIRQIRNEGK…RPKPIDMPPK (324 aa)) the chain is on the cytoplasmic side. 2 disordered regions span residues 867-948 (RIPN…SSDD) and 995-1022 (IYDQEQKNGRSKVLSQLKRPKPIDMPPK). Residues 893–907 (SDPPVPTSPLPPPPK) are compositionally biased toward pro residues. Residues 933–943 (DDSPSISNSSD) show a composition bias toward low complexity.

The protein belongs to the sodium:neurotransmitter symporter (SNF) (TC 2.A.22) family. In terms of assembly, may interact with STAT family transcription factor sta-2; the interaction is probably direct.

It localises to the membrane. The protein localises to the cytoplasm. The protein resides in the vesicle. Its function is as follows. Probably mediates sodium-dependent uptake of unknown small molecule(s). By positively modulating expression, in the epidermis, of antimicrobial peptides such as nlp-29, plays a role in resistance to fungal infection and in the response to physical wounding and phorbol ester PMA treatment. Role in response to wounding of the epidermis may be facilitated by recruitment of snf-12 to the wound site by microtubule-dependent vesicle trafficking. Functions cell autonomously in the epidermis, in concert with STAT transcription factor sta-2, probably acting at vesicular membranes, downstream of a p38 MAPK/pmk-1 pathway. This chain is Sodium-dependent transporter snf-12, found in Caenorhabditis elegans.